The primary structure comprises 104 residues: Large ribosomal subunit protein uL24 (104 aa).

Belongs to the universal ribosomal protein uL24 family. In terms of assembly, part of the 50S ribosomal subunit.

Its function is as follows. One of two assembly initiator proteins, it binds directly to the 5'-end of the 23S rRNA, where it nucleates assembly of the 50S subunit. Functionally, one of the proteins that surrounds the polypeptide exit tunnel on the outside of the subunit. The polypeptide is Large ribosomal subunit protein uL24 (Mesorhizobium japonicum (strain LMG 29417 / CECT 9101 / MAFF 303099) (Mesorhizobium loti (strain MAFF 303099))).